Here is a 180-residue protein sequence, read N- to C-terminus: Bifunctional protein PyrR (180 aa).

A PRPP-binding motif is present at residues 99–111 (VILVDDVLYTCRT).

Belongs to the purine/pyrimidine phosphoribosyltransferase family. PyrR subfamily. Homodimer and homohexamer; in equilibrium.

The enzyme catalyses UMP + diphosphate = 5-phospho-alpha-D-ribose 1-diphosphate + uracil. Functionally, regulates transcriptional attenuation of the pyrimidine nucleotide (pyr) operon by binding in a uridine-dependent manner to specific sites on pyr mRNA. This disrupts an antiterminator hairpin in the RNA and favors formation of a downstream transcription terminator, leading to a reduced expression of downstream genes. Also displays a weak uracil phosphoribosyltransferase activity which is not physiologically significant. This Clostridium botulinum (strain Eklund 17B / Type B) protein is Bifunctional protein PyrR.